Reading from the N-terminus, the 308-residue chain is Testis-expressed protein 52 (308 aa).

In terms of tissue distribution, expressed in Testis.

The chain is Testis-expressed protein 52 from Mus musculus (Mouse).